The following is a 126-amino-acid chain: Holo-[acyl-carrier-protein] synthase (126 aa).

Mg(2+)-binding residues include Asp-8 and Glu-59.

Belongs to the P-Pant transferase superfamily. AcpS family. Mg(2+) is required as a cofactor.

It localises to the cytoplasm. The enzyme catalyses apo-[ACP] + CoA = holo-[ACP] + adenosine 3',5'-bisphosphate + H(+). In terms of biological role, transfers the 4'-phosphopantetheine moiety from coenzyme A to a Ser of acyl-carrier-protein. This Rickettsia akari (strain Hartford) protein is Holo-[acyl-carrier-protein] synthase.